The following is a 155-amino-acid chain: Ribosomal RNA large subunit methyltransferase H (155 aa).

S-adenosyl-L-methionine-binding positions include Leu-73, Gly-104, and 123-128 (LSALTL).

Belongs to the RNA methyltransferase RlmH family. In terms of assembly, homodimer.

The protein resides in the cytoplasm. The catalysed reaction is pseudouridine(1915) in 23S rRNA + S-adenosyl-L-methionine = N(3)-methylpseudouridine(1915) in 23S rRNA + S-adenosyl-L-homocysteine + H(+). In terms of biological role, specifically methylates the pseudouridine at position 1915 (m3Psi1915) in 23S rRNA. The sequence is that of Ribosomal RNA large subunit methyltransferase H from Chromohalobacter salexigens (strain ATCC BAA-138 / DSM 3043 / CIP 106854 / NCIMB 13768 / 1H11).